The following is a 490-amino-acid chain: 5-hydroxytryptamine receptor 3A (490 aa).

An N-terminal signal peptide occupies residues 1–19; it reads MVLWLQLALLALLLPTSLA. Residues 20-249 lie on the Extracellular side of the membrane; sequence QGEVRGKGTA…FYVVIRRRPL (230 aa). N-linked (GlcNAc...) asparagine glycosylation is found at Asn33, Asn109, Asn175, and Asn191. Cys162 and Cys176 form a disulfide bridge. The helical transmembrane segment at 250–270 threads the bilayer; that stretch reads FYAVTLLLPSIFLMIVDIVGF. At 271–285 the chain is on the cytoplasmic side; the sequence is YLPPDSGERVSFKIT. The chain crosses the membrane as a helical span at residues 286–306; that stretch reads LLLGYSVFLIIVSDTLPATAI. Residues 307 to 312 are Extracellular-facing; it reads GTPLIS. The chain crosses the membrane as a helical span at residues 313 to 333; the sequence is VYFVVCMALLVISLAETILIV. Over 334–467 the chain is Cytoplasmic; sequence RLVHKQDLQQ…GSVLDKLLFR (134 aa). A disordered region spans residues 401–422; it reads GGPQDLEKTSRGRGSPPPPPRE. The HA-stretch; determines single-channel conductance in 5-HT3 receptors stretch occupies residues 426-462; that stretch reads AMCGLLQELASIRHFLEKREETREVARDWLRVGSVLD. A helical membrane pass occupies residues 468-488; that stretch reads VYLLAVLAYSITLVTLWSVWH. At 489–490 the chain is on the extracellular side; it reads YA.

Belongs to the ligand-gated ion channel (TC 1.A.9) family. 5-hydroxytryptamine receptor (TC 1.A.9.2) subfamily. HTR3A sub-subfamily. In terms of assembly, forms homopentameric as well as heteropentameric serotonin-activated cation-selective channel complexes with HTR3B or HTR3C or HTR3D or HTR3E. The homomeric complex is functional but exhibits low conductance with modified voltage dependence, and decreased agonist and antagonist affinity. Heteropentameric complexes display properties which resemble that of neuronal serotonin-activated channels in vivo. Interacts with RIC3. Expressed in cortex, intestine and liver. Not expressed in muscle or spleen.

It localises to the postsynaptic cell membrane. The protein localises to the cell membrane. It carries out the reaction Na(+)(in) = Na(+)(out). It catalyses the reaction K(+)(in) = K(+)(out). The enzyme catalyses Ca(2+)(in) = Ca(2+)(out). The catalysed reaction is Mg(2+)(in) = Mg(2+)(out). Its function is as follows. Forms serotonin (5-hydroxytryptamine/5-HT3)-activated cation-selective channel complexes, which when activated cause fast, depolarizing responses in neurons. This Cavia porcellus (Guinea pig) protein is 5-hydroxytryptamine receptor 3A.